Here is a 276-residue protein sequence, read N- to C-terminus: MSRLIIPSHSPNEEGNVVRVTPESVGWEYVGFEVYVLAKGQTLRKETKDQEACLVLLKGKANISTKLERWEQIGLRMDVFEKVPPYSVYVPANDVYEVEAMTDVEVAVCLAPGKGTYPARLIPPSEVGVEIRGAGNIERRVHNILPESQPADSLLVVEVFTPEGNWSSYPPHKHDQDNLPHESYLEETYYHKINPGHGFMVQRVYTDDRSIDETMVVKNGDVVLVPKGYHPVSAPPGYEGYYLNVMAGPVRTWKFHNDPDHDWVMESKLAAKQKEK.

Belongs to the isomerase IolB family.

It carries out the reaction 5-deoxy-D-glucuronate = 5-dehydro-2-deoxy-D-gluconate. It functions in the pathway polyol metabolism; myo-inositol degradation into acetyl-CoA; acetyl-CoA from myo-inositol: step 4/7. In terms of biological role, involved in the isomerization of 5-deoxy-glucuronate (5DG) to 5-dehydro-2-deoxy-D-gluconate (DKG or 2-deoxy-5-keto-D-gluconate). The protein is 5-deoxy-glucuronate isomerase of Geobacillus kaustophilus (strain HTA426).